The chain runs to 529 residues: Probable threonine/serine exporter (529 aa).

The next 10 helical transmembrane spans lie at 88 to 108 (ITVT…PVTI), 168 to 188 (FALG…LAAV), 212 to 232 (VFGA…AGQD), 234 to 254 (TALV…VGSM), 265 to 285 (ALAR…GILI), 312 to 332 (MPLP…CLTI), 344 to 364 (AGLS…AGFG), 365 to 385 (RVVA…LISI), 389 to 409 (APAL…LAVF), and 428 to 448 (LLEA…GEFL). The disordered stretch occupies residues 482-501 (QPAKSQQPTGTGGQRWRSVA).

The protein belongs to the ThrE exporter (TC 2.A.79) family.

It localises to the cell membrane. The catalysed reaction is L-threonine(in) + H(+)(out) = L-threonine(out) + H(+)(in). Its function is as follows. Catalyzes the export of L-threonine and L-serine from the cell to the extracellular environment. Export is dependent on the proton motive force. Required for in vitro growth and survival of bacteria inside macrophages. Increased expression is associated with low-level amikacin (AMK) resistance. The sequence is that of Probable threonine/serine exporter from Mycobacterium tuberculosis (strain ATCC 25618 / H37Rv).